A 356-amino-acid polypeptide reads, in one-letter code: Ferrochelatase (356 aa).

Fe cation contacts are provided by His-214 and Glu-295.

This sequence belongs to the ferrochelatase family.

It is found in the cytoplasm. It carries out the reaction heme b + 2 H(+) = protoporphyrin IX + Fe(2+). It functions in the pathway porphyrin-containing compound metabolism; protoheme biosynthesis; protoheme from protoporphyrin-IX: step 1/1. In terms of biological role, catalyzes the ferrous insertion into protoporphyrin IX. The sequence is that of Ferrochelatase from Paraburkholderia xenovorans (strain LB400).